Reading from the N-terminus, the 91-residue chain is Small ribosomal subunit protein uS19 (91 aa).

The protein belongs to the universal ribosomal protein uS19 family.

Functionally, protein S19 forms a complex with S13 that binds strongly to the 16S ribosomal RNA. This chain is Small ribosomal subunit protein uS19, found in Prochlorococcus marinus subsp. pastoris (strain CCMP1986 / NIES-2087 / MED4).